Here is a 228-residue protein sequence, read N- to C-terminus: Cytidylate kinase (228 aa).

12 to 20 (GPSGSGKGT) contacts ATP.

The protein belongs to the cytidylate kinase family. Type 1 subfamily.

It localises to the cytoplasm. It catalyses the reaction CMP + ATP = CDP + ADP. It carries out the reaction dCMP + ATP = dCDP + ADP. The protein is Cytidylate kinase of Pseudomonas putida (strain ATCC 47054 / DSM 6125 / CFBP 8728 / NCIMB 11950 / KT2440).